A 461-amino-acid chain; its full sequence is Mannan endo-1,4-beta-mannosidase 4 (461 aa).

Substrate is bound by residues Trp80 and Asn195. The Proton donor role is filled by Glu196. Residue Tyr274 coordinates substrate. Residue Glu314 is the Nucleophile of the active site. 2 residues coordinate substrate: Trp357 and Asp364.

This sequence belongs to the glycosyl hydrolase 5 (cellulase A) family. In terms of tissue distribution, ubiquitous.

The catalysed reaction is Random hydrolysis of (1-&gt;4)-beta-D-mannosidic linkages in mannans, galactomannans and glucomannans.. This is Mannan endo-1,4-beta-mannosidase 4 (MAN4) from Oryza sativa subsp. japonica (Rice).